A 413-amino-acid polypeptide reads, in one-letter code: Serine hydroxymethyltransferase (413 aa).

(6S)-5,6,7,8-tetrahydrofolate is bound by residues Leu-117 and 121–123; that span reads GHL. N6-(pyridoxal phosphate)lysine is present on Lys-226. 349–351 serves as a coordination point for (6S)-5,6,7,8-tetrahydrofolate; the sequence is SPF.

The protein belongs to the SHMT family. In terms of assembly, homodimer. It depends on pyridoxal 5'-phosphate as a cofactor.

The protein localises to the cytoplasm. The enzyme catalyses (6R)-5,10-methylene-5,6,7,8-tetrahydrofolate + glycine + H2O = (6S)-5,6,7,8-tetrahydrofolate + L-serine. The protein operates within one-carbon metabolism; tetrahydrofolate interconversion. It functions in the pathway amino-acid biosynthesis; glycine biosynthesis; glycine from L-serine: step 1/1. Catalyzes the reversible interconversion of serine and glycine with tetrahydrofolate (THF) serving as the one-carbon carrier. This reaction serves as the major source of one-carbon groups required for the biosynthesis of purines, thymidylate, methionine, and other important biomolecules. Also exhibits THF-independent aldolase activity toward beta-hydroxyamino acids, producing glycine and aldehydes, via a retro-aldol mechanism. The chain is Serine hydroxymethyltransferase from Pelobacter propionicus (strain DSM 2379 / NBRC 103807 / OttBd1).